The following is a 246-amino-acid chain: 3-deoxy-manno-octulosonate cytidylyltransferase (246 aa).

Belongs to the KdsB family. As to quaternary structure, homodimer.

It is found in the cytoplasm. It carries out the reaction 3-deoxy-alpha-D-manno-oct-2-ulosonate + CTP = CMP-3-deoxy-beta-D-manno-octulosonate + diphosphate. Its pathway is nucleotide-sugar biosynthesis; CMP-3-deoxy-D-manno-octulosonate biosynthesis; CMP-3-deoxy-D-manno-octulosonate from 3-deoxy-D-manno-octulosonate and CTP: step 1/1. It participates in bacterial outer membrane biogenesis; lipopolysaccharide biosynthesis. Activates KDO (a required 8-carbon sugar) for incorporation into bacterial lipopolysaccharide in Gram-negative bacteria. The protein is 3-deoxy-manno-octulosonate cytidylyltransferase (kpsU) of Escherichia coli.